The sequence spans 496 residues: Cytochrome P450 71B14 (496 aa).

Residues 1–21 traverse the membrane as a helical segment; sequence MIWWFIVGASFFFAFILIAKD. C436 contributes to the heme binding site.

This sequence belongs to the cytochrome P450 family. Heme is required as a cofactor.

The protein resides in the membrane. The polypeptide is Cytochrome P450 71B14 (CYP71B14) (Arabidopsis thaliana (Mouse-ear cress)).